A 198-amino-acid polypeptide reads, in one-letter code: GTP cyclohydrolase 1 (198 aa).

Zn(2+)-binding residues include Cys87, His90, and Cys158.

This sequence belongs to the GTP cyclohydrolase I family. In terms of assembly, homomer.

The enzyme catalyses GTP + H2O = 7,8-dihydroneopterin 3'-triphosphate + formate + H(+). The protein operates within cofactor biosynthesis; 7,8-dihydroneopterin triphosphate biosynthesis; 7,8-dihydroneopterin triphosphate from GTP: step 1/1. The sequence is that of GTP cyclohydrolase 1 from Janthinobacterium sp. (strain Marseille) (Minibacterium massiliensis).